We begin with the raw amino-acid sequence, 136 residues long: MIIGIGTDILQIERLQAAYDRTKGRLAEKILGPDEMLVFQHRLARNHKRGIAFLATRFAAKEAFSKAIGLGMRMPMAWRSLQTLNEPSGRPVTSYLGTLAQFMQEKNWEAHVTVSDEQDMAIAQVIVTQKIRGSDE.

Residues Asp8 and Glu62 each coordinate Mg(2+).

It belongs to the P-Pant transferase superfamily. AcpS family. Mg(2+) serves as cofactor.

It localises to the cytoplasm. It catalyses the reaction apo-[ACP] + CoA = holo-[ACP] + adenosine 3',5'-bisphosphate + H(+). Its function is as follows. Transfers the 4'-phosphopantetheine moiety from coenzyme A to a Ser of acyl-carrier-protein. The polypeptide is Holo-[acyl-carrier-protein] synthase (Polynucleobacter necessarius subsp. necessarius (strain STIR1)).